Consider the following 173-residue polypeptide: NADH-ubiquinone oxidoreductase chain 6 (173 aa).

6 helical membrane passes run 1 to 21, 27 to 47, 48 to 68, 87 to 107, 113 to 133, and 139 to 159; these read MTYFVLFLGLCFVLGGLAVAS, YGVVGLVLASIAGCGWLLSLG, VSFVSLVLFMVYLGGMLVVFV, VVGYGVSLITVLVVGVVVGGF, FGVITVDSVGMFSVRLDFGGV, and CGVGMFLVAGWGLLLTLFVVL.

The protein belongs to the complex I subunit 6 family.

It is found in the mitochondrion membrane. The catalysed reaction is a ubiquinone + NADH + 5 H(+)(in) = a ubiquinol + NAD(+) + 4 H(+)(out). Core subunit of the mitochondrial membrane respiratory chain NADH dehydrogenase (Complex I) that is believed to belong to the minimal assembly required for catalysis. Complex I functions in the transfer of electrons from NADH to the respiratory chain. The immediate electron acceptor for the enzyme is believed to be ubiquinone. This chain is NADH-ubiquinone oxidoreductase chain 6 (MT-ND6), found in Alle alle (Dovekie).